Here is a 359-residue protein sequence, read N- to C-terminus: Tyrosine-protein phosphatase non-receptor type 7 (359 aa).

The disordered stretch occupies residues 1–34 (MVQACEGRSRAQLPTLSLGADMTQPPPAKAPAKK). The interaction with MAP kinases stretch occupies residues 38–51 (LQERRGSSVALMLD). Ser-44 carries the post-translational modification Phosphoserine. Thr-66 carries the post-translational modification Phosphothreonine. Ser-93 and Ser-143 each carry phosphoserine. The Tyrosine-protein phosphatase domain occupies 97-349 (LEEEFLKIPS…QFLHHTLALY (253 aa)). Substrate is bound by residues Asp-257, 290 to 296 (CSAGIGR), and Gln-334. Catalysis depends on Cys-290, which acts as the Phosphocysteine intermediate. Residue Cys-290 is modified to Cysteine sulfenic acid (-SOH).

The protein belongs to the protein-tyrosine phosphatase family. Non-receptor class subfamily. Oxidized at active site cysteine. Treatment with pervanadate (vanadate and H(2)O(2)) or with antigen enhanced oxidation of active site cysteine.

Its subcellular location is the cytoplasm. It localises to the cytoskeleton. It carries out the reaction O-phospho-L-tyrosyl-[protein] + H2O = L-tyrosyl-[protein] + phosphate. Its activity is regulated as follows. Inhibited in cells after FCER1A triggering. Its function is as follows. May play a role in the regulation of T and B-lymphocyte development and signal transduction. The protein is Tyrosine-protein phosphatase non-receptor type 7 (Ptpn7) of Rattus norvegicus (Rat).